Here is a 346-residue protein sequence, read N- to C-terminus: RNA-directed DNA methylation 4 (346 aa).

Met1 bears the N-acetylmethionine mark. Composition is skewed to acidic residues over residues 253–268 (FCDG…EDSN), 278–312 (PEEE…DDEE), and 323–332 (GDDEFDDYAE). The disordered stretch occupies residues 253 to 346 (FCDGSDESDY…YSESDEEFES (94 aa)).

The protein belongs to the IWR1/SLC7A6OS family. As to quaternary structure, interacts with NRPD1. Associates with Pol II and Pol V complexes.

Probable regulatory factor for several RNA polymerases. Effector involved in facilitation of Pol V transcription as RNA scaffold and recruitment of silencing complex to target genomic sites. The sequence is that of RNA-directed DNA methylation 4 (RDM4) from Arabidopsis thaliana (Mouse-ear cress).